A 191-amino-acid polypeptide reads, in one-letter code: Adenine phosphoribosyltransferase 5 (191 aa).

It belongs to the purine/pyrimidine phosphoribosyltransferase family. Homodimer.

The protein localises to the cytoplasm. The enzyme catalyses AMP + diphosphate = 5-phospho-alpha-D-ribose 1-diphosphate + adenine. The protein operates within purine metabolism; AMP biosynthesis via salvage pathway; AMP from adenine: step 1/1. Catalyzes a salvage reaction resulting in the formation of AMP, that is energically less costly than de novo synthesis. May contribute to the recycling of adenine into adenylate nucleotides and the inactivation of cytokinins by phosphoribosylation. Possesses low activity toward adenine, but can efficiently convert cytokinins from free bases (active form) to the corresponding nucleotides (inactive form). This chain is Adenine phosphoribosyltransferase 5 (APT5), found in Arabidopsis thaliana (Mouse-ear cress).